We begin with the raw amino-acid sequence, 516 residues long: 2-isopropylmalate synthase (516 aa).

One can recognise a Pyruvate carboxyltransferase domain in the interval 5–267 (VIIFDTTLRD…STNIVHKEIY (263 aa)). Mn(2+) is bound by residues aspartate 14, histidine 202, histidine 204, and asparagine 238. A regulatory domain region spans residues 392-516 (YLKFFSVQSI…NKKLKNLKKY (125 aa)).

This sequence belongs to the alpha-IPM synthase/homocitrate synthase family. LeuA type 1 subfamily. Homodimer. Requires Mn(2+) as cofactor.

The protein resides in the cytoplasm. It catalyses the reaction 3-methyl-2-oxobutanoate + acetyl-CoA + H2O = (2S)-2-isopropylmalate + CoA + H(+). Its pathway is amino-acid biosynthesis; L-leucine biosynthesis; L-leucine from 3-methyl-2-oxobutanoate: step 1/4. In terms of biological role, catalyzes the condensation of the acetyl group of acetyl-CoA with 3-methyl-2-oxobutanoate (2-ketoisovalerate) to form 3-carboxy-3-hydroxy-4-methylpentanoate (2-isopropylmalate). The sequence is that of 2-isopropylmalate synthase from Buchnera aphidicola subsp. Diuraphis noxia.